The primary structure comprises 2161 residues: Voltage-dependent L-type calcium channel subunit alpha-1D (2161 aa).

3 disordered regions span residues 1–21 (MMMMMMMKKMQHQRQQQADHA), 30–49 (TRLPLSGEGPTSQPNSSKQT), and 64–100 (KAAQTMSTSAPPPVGSLSQRKRQQYAKSKKQGNSSNS). Over 1–126 (MMMMMMMKKM…RACISIVEWK (126 aa)) the chain is Cytoplasmic. The segment covering 38-49 (GPTSQPNSSKQT) has biased composition (polar residues). The span at 82–93 (QRKRQQYAKSKK) shows a compositional bias: basic residues. The I repeat unit spans residues 113–409 (NPIRRACISI…LVLGVLSGEF (297 aa)). The chain crosses the membrane as a helical span at residues 127–145 (PFDIFILLAIFANCVALAI). Residues 146 to 163 (YIPFPEDDSNSTNHNLEK) lie on the Extracellular side of the membrane. Asparagine 155 carries an N-linked (GlcNAc...) asparagine glycan. A helical membrane pass occupies residues 164–183 (VEYAFLIIFTVETFLKIIAY). Residues 184 to 195 (GLLLHPNAYVRN) are Cytoplasmic-facing. Residues 196–214 (GWNLLDFVIVIVGLFSVIL) traverse the membrane as a helical segment. Topologically, residues 215-235 (EQLTKETEGGNHSSGKSGGFD) are extracellular. Residue asparagine 225 is glycosylated (N-linked (GlcNAc...) asparagine). The chain crosses the membrane as a helical span at residues 236-254 (VKALRAFRVLRPLRLVSGV). Residues 255 to 273 (PSLQVVLNSIIKAMVPLLH) lie on the Cytoplasmic side of the membrane. A helical transmembrane segment spans residues 274-293 (IALLVLFVIIIYAIIGLELF). The Extracellular segment spans residues 294–381 (IGKMHKTCFF…WMNDAMGFEL (88 aa)). A glycan (N-linked (GlcNAc...) asparagine) is linked at asparagine 329. Glutamate 364 contributes to the Ca(2+) binding site. A helical membrane pass occupies residues 382 to 406 (PWVYFVSLVIFGSFFVLNLVLGVLS). The Cytoplasmic segment spans residues 407–523 (GEFSKEREKA…RRCRAAVKSV (117 aa)). The segment at 429–446 (QQLEEDLKGYLDWITQAE) is binding to the beta subunit. Residues 449–482 (DPENEEEGGEEGKRNTSMPTSETESVNTENVSGE) are disordered. Residues 463–479 (NTSMPTSETESVNTENV) are compositionally biased toward polar residues. The II repeat unit spans residues 509-755 (NRFNRRRCRA…VFLAIAVDNL (247 aa)). The helical transmembrane segment at 524-543 (TFYWLVIVLVFLNTLTISSE) threads the bilayer. Topologically, residues 544–558 (HYNQPDWLTQIQDIA) are extracellular. A helical membrane pass occupies residues 559–577 (NKVLLALFTCEMLVKMYSL). Over 578-585 (GLQAYFVS) the chain is Cytoplasmic. Residues 586 to 604 (LFNRFDCFVVCGGITETIL) traverse the membrane as a helical segment. The Extracellular segment spans residues 605–614 (VELEIMSPLG). Residues 615–633 (ISVFRCVRLLRIFKVTRHW) form a helical membrane-spanning segment. Over 634-652 (TSLSNLVASLLNSMKSIAS) the chain is Cytoplasmic. The helical transmembrane segment at 653-673 (LLLLLFLFIIIFSLLGMQLFG) threads the bilayer. The Extracellular segment spans residues 674-727 (GKFNFDETQTKRSTFDNFPQALLTVFQILTGEDWNAVMYDGIMAYGGPSSSGMI). Glutamate 705 provides a ligand contact to Ca(2+). Residues 728–752 (VCIYFIILFICGNYILLNVFLAIAV) form a helical membrane-spanning segment. The Cytoplasmic segment spans residues 753 to 886 (DNLADAESLN…VGCHKLINHH (134 aa)). Over residues 766 to 790 (KEEAEEKERKKIARKESLENKKNNK) the composition is skewed to basic and acidic residues. A disordered region spans residues 766–850 (KEEAEEKERK…AGPRPRRISE (85 aa)). Polar residues predominate over residues 791 to 802 (PEVNQIANSDNK). The span at 825–838 (VGEEEEEEEEDEPE) shows a compositional bias: acidic residues. An III repeat occupies 873–1155 (NPIRVGCHKL…IFVGFVIVTF (283 aa)). A helical membrane pass occupies residues 887 to 905 (IFTNLILVFIMLSSAALAA). Topologically, residues 906–921 (EDPIRSHSFRNTILGY) are extracellular. Residues 922-941 (FDYAFTAIFTVEILLKMTTF) traverse the membrane as a helical segment. Residues 942–953 (GAFLHKGAFCRN) lie on the Cytoplasmic side of the membrane. Residues 954-972 (YFNLLDMLVVGVSLVSFGI) form a helical membrane-spanning segment. The Extracellular portion of the chain corresponds to 973–978 (QSSAIS). The helical transmembrane segment at 979–998 (VVKILRVLRVLRPLRAINRA) threads the bilayer. Residues 999 to 1017 (KGLKHVVQCVFVAIRTIGN) are Cytoplasmic-facing. A helical transmembrane segment spans residues 1018–1037 (IMIVTTLLQFMFACIGVQLF). At 1038 to 1127 (KGKFYRCTDE…IGPIYNHRVE (90 aa)) the chain is on the extracellular side. The dihydropyridine binding stretch occupies residues 1075 to 1165 (RIWQNSDFNF…QEQGEKEYKN (91 aa)). Glutamate 1101 is a binding site for Ca(2+). Residues 1128–1148 (ISIFFIIYIIIVAFFMMNIFV) form a helical membrane-spanning segment. Topologically, residues 1149-1205 (GFVIVTFQEQGEKEYKNCELDKNQRQCVEYALKARPLRRYIPKNPYQYKFWYVVNSS) are cytoplasmic. The IV repeat unit spans residues 1192–1467 (NPYQYKFWYV…LFVAVIMDNF (276 aa)). Residues 1206–1224 (PFEYMMFVLIMLNTLCLAM) traverse the membrane as a helical segment. The Extracellular portion of the chain corresponds to 1225-1239 (QHYEQSKMFNDAMDI). A helical membrane pass occupies residues 1240–1259 (LNMVFTGVFTVEMVLKVIAF). At 1260–1266 (KPKGYFS) the chain is on the cytoplasmic side. The helical transmembrane segment at 1267–1288 (DAWNTFDSLIVIGSIIDVALSE) threads the bilayer. The Extracellular segment spans residues 1289–1313 (ADPTESENVPVPTATPGNSEESNRI). A helical transmembrane segment spans residues 1314 to 1333 (SITFFRLFRVMRLVKLLSRG). The Cytoplasmic segment spans residues 1334 to 1352 (EGIRTLLWTFIKSFQALPY). The helical transmembrane segment at 1353-1372 (VALLIAMLFFIYAVIGMQMF) threads the bilayer. Residues 1373 to 1439 (GKVAMRDNNQ…GEEYTCGSNF (67 aa)) are Extracellular-facing. A dihydropyridine binding region spans residues 1420-1486 (LCDPESDYNP…LGPHHLDEFK (67 aa)). Residues 1432–1475 (EYTCGSNFAIVYFISFYMLCAFLIINLFVAVIMDNFDYLTRDWS) form a phenylalkylamine binding region. The chain crosses the membrane as a helical span at residues 1440–1464 (AIVYFISFYMLCAFLIINLFVAVIM). The Cytoplasmic portion of the chain corresponds to 1465–2161 (DNFDYLTRDW…ADEMICITTL (697 aa)). Disordered stretches follow at residues 1659–1678 (SCDLQDDEPEETKREEEDDV), 1684–1804 (ALLG…VKRT), 1872–1919 (PGRN…ASHR), and 2108–2152 (NGNV…EDLA). The segment covering 1745-1763 (SIGKQVPTSTNANLNNANM) has biased composition (polar residues). Over residues 1779-1797 (HVSENGHHSSHKHDREPQR) the composition is skewed to basic and acidic residues. Residues 2138-2152 (SDEEPDPGRDEEDLA) are compositionally biased toward acidic residues.

It belongs to the calcium channel alpha-1 subunit (TC 1.A.1.11) family. CACNA1D subfamily. Voltage-dependent calcium channels are multisubunit complexes, consisting of alpha-1, alpha-2, beta and delta subunits in a 1:1:1:1 ratio. The channel activity is directed by the pore-forming and voltage-sensitive alpha-1 subunit. In many cases, this subunit is sufficient to generate voltage-sensitive calcium channel activity. The auxiliary subunits beta and alpha-2/delta linked by a disulfide bridge regulate the channel activity. Channel activity is further modulated, depending on the presence of specific delta subunit isoforms. Interacts (via IQ domain) with CABP1 and CABP4 in a calcium independent manner. Interacts with RIMBP2. Expressed in pancreatic islets and in brain, where it has been seen in cerebral cortex, hippocampus, basal ganglia, habenula and thalamus. Expressed in the small cell lung carcinoma cell line SCC-9. No expression in skeletal muscle.

It is found in the membrane. The catalysed reaction is Ca(2+)(in) = Ca(2+)(out). Its function is as follows. Voltage-sensitive calcium channels (VSCC) mediate the entry of calcium ions into excitable cells and are also involved in a variety of calcium-dependent processes, including muscle contraction, hormone or neurotransmitter release, gene expression, cell motility, cell division and cell death. The isoform alpha-1D gives rise to L-type calcium currents. Long-lasting (L-type) calcium channels belong to the 'high-voltage activated' (HVA) group. They are blocked by dihydropyridines (DHP), phenylalkylamines, and by benzothiazepines. Voltage-sensitive calcium channels (VSCC) mediate the entry of calcium ions into excitable cells and are also involved in a variety of calcium-dependent processes, including muscle contraction, hormone or neurotransmitter release, gene expression, cell motility, cell division and cell death. The isoform alpha-1D gives rise to L-type calcium currents. In Homo sapiens (Human), this protein is Voltage-dependent L-type calcium channel subunit alpha-1D (CACNA1D).